The following is a 293-amino-acid chain: 4-hydroxy-tetrahydrodipicolinate synthase (293 aa).

Thr45 provides a ligand contact to pyruvate. Tyr133 (proton donor/acceptor) is an active-site residue. Catalysis depends on Lys161, which acts as the Schiff-base intermediate with substrate. Ile203 lines the pyruvate pocket.

This sequence belongs to the DapA family. In terms of assembly, homotetramer; dimer of dimers.

It is found in the cytoplasm. The enzyme catalyses L-aspartate 4-semialdehyde + pyruvate = (2S,4S)-4-hydroxy-2,3,4,5-tetrahydrodipicolinate + H2O + H(+). It participates in amino-acid biosynthesis; L-lysine biosynthesis via DAP pathway; (S)-tetrahydrodipicolinate from L-aspartate: step 3/4. In terms of biological role, catalyzes the condensation of (S)-aspartate-beta-semialdehyde [(S)-ASA] and pyruvate to 4-hydroxy-tetrahydrodipicolinate (HTPA). The protein is 4-hydroxy-tetrahydrodipicolinate synthase of Aliivibrio fischeri (strain MJ11) (Vibrio fischeri).